We begin with the raw amino-acid sequence, 232 residues long: Cytidylate kinase (232 aa).

A disordered region spans residues M1–S21. Residue G13–S21 coordinates ATP.

Belongs to the cytidylate kinase family. Type 1 subfamily.

Its subcellular location is the cytoplasm. It catalyses the reaction CMP + ATP = CDP + ADP. The catalysed reaction is dCMP + ATP = dCDP + ADP. This Nocardia farcinica (strain IFM 10152) protein is Cytidylate kinase.